A 329-amino-acid chain; its full sequence is GMP reductase (329 aa).

Residue cysteine 178 is the Thioimidate intermediate of the active site. NADP(+) is bound at residue 207–230 (IIADGGIRNNGDIAKSIRFGATMC).

It belongs to the IMPDH/GMPR family. GuaC type 2 subfamily.

The enzyme catalyses IMP + NH4(+) + NADP(+) = GMP + NADPH + 2 H(+). Functionally, catalyzes the irreversible NADPH-dependent deamination of GMP to IMP. It functions in the conversion of nucleobase, nucleoside and nucleotide derivatives of G to A nucleotides, and in maintaining the intracellular balance of A and G nucleotides. This Lacticaseibacillus paracasei (strain ATCC 334 / BCRC 17002 / CCUG 31169 / CIP 107868 / KCTC 3260 / NRRL B-441) (Lactobacillus paracasei) protein is GMP reductase.